The primary structure comprises 784 residues: Transcription factor E4F1 (784 aa).

A required for ubiquitin ligase activity region spans residues 41-85; sequence GFLGLPAPFSEEDEDDVHRCGRCQAEFTALEDFVQHKIQKACQRA. Ser-50 bears the Phosphoserine mark. The tract at residues 184–263 is mediates dimerization, DNA-binding, transcription repression of CCNA2 and interaction with HMGA2; sequence LLVNKDGRYV…GKSFRESGAL (80 aa). C2H2-type zinc fingers lie at residues 192–214 and 220–242; these read YVCALCHKTFKTGSILKAHMVTH and HECKLCGASFRTKGSLIRHHRRH. Residues 248–272 form a C2H2-type 3; degenerate zinc finger; it reads YKCSKCGKSFRESGALTRHLKSLTP. Residues 369–566 form a mediates interaction with CDKN2A region; sequence NLLHQAMQNS…REKGSLVRHV (198 aa). 5 C2H2-type zinc fingers span residues 435–457, 463–485, 491–513, 519–541, and 547–569; these read HPCPQCSETFPTAATLEAHKRGH, FACAQCGKAFPKAYLLKKHQEVH, FRCGDCGKLYKTIAHVRGHRRVH, YPCPKCGKRYKTKNAQQVHFRTH, and HVCQFCSRGFREKGSLVRHVRHH. The interval 435 to 599 is interaction with BMI1; sequence HPCPQCSETF…LNRHLRTKGG (165 aa). The interval 521-580 is mediates interaction with TP53; the sequence is CPKCGKRYKTKNAQQVHFRTHLEEKPHVCQFCSRGFREKGSLVRHVRHHTGEKPFKCYKC. The C2H2-type 9; degenerate zinc finger occupies 575-597; the sequence is FKCYKCGRGFAEHGTLNRHLRTK. The segment at 575–597 is mediates interaction with RASSF1; that stretch reads FKCYKCGRGFAEHGTLNRHLRTK.

Homodimer; binds DNA as a dimer. Forms a complex with CDKN2A and TP53. Interactions with TP53, RB1, ANP32A, BMI1 and FHL2 regulate E4F1 activity. Interacts with HDAC1, HMGA2 and RASSF1. In terms of assembly, (Microbial infection) Interacts with HBV protein X. In terms of processing, proteolytic cleavage produces a 50 kDa N-terminal peptide (p50E4F) which has a DNA-binding activity and activates transcription in presence of the adenoviral E1A protein. The major full-length protein (p120E4F) functions as a repressor of transcription. Phosphorylated; p120E4F and p50E4F are both phosphorylated. Phosphorylation is cell cycle-dependent and differentially regulates DNA-binding activity and function of both forms. Post-translationally, may be sumoylated by UBE2I upon interaction with CDKN2A. In terms of tissue distribution, ubiquitously expressed.

Its subcellular location is the nucleus. It is found in the nucleoplasm. It localises to the cytoplasm. The enzyme catalyses S-ubiquitinyl-[E2 ubiquitin-conjugating enzyme]-L-cysteine + [acceptor protein]-L-lysine = [E2 ubiquitin-conjugating enzyme]-L-cysteine + N(6)-ubiquitinyl-[acceptor protein]-L-lysine.. Its pathway is protein modification; protein ubiquitination. Its function is as follows. May function as a transcriptional repressor. May also function as a ubiquitin ligase mediating ubiquitination of chromatin-associated TP53. Functions in cell survival and proliferation through control of the cell cycle. Functions in the p53 and pRB tumor suppressor pathways and regulates the cyclin CCNA2 transcription. In terms of biological role, identified as a cellular target of the adenoviral oncoprotein E1A, it is required for both transcriptional activation and repression of viral genes. This Homo sapiens (Human) protein is Transcription factor E4F1 (E4F1).